The following is a 178-amino-acid chain: Cytochrome b6-f complex iron-sulfur subunit (178 aa).

A helical transmembrane segment spans residues 20–42 (LLTFGTATGVALGALYPVANYFM). In terms of domain architecture, Rieske spans 71–161 (NHPAGDRSLV…IDVEDDKVFV (91 aa)). Residues Cys-107, His-109, Cys-125, and His-128 each contribute to the [2Fe-2S] cluster site. Cys-112 and Cys-127 are joined by a disulfide.

Belongs to the Rieske iron-sulfur protein family. The 4 large subunits of the cytochrome b6-f complex are cytochrome b6, subunit IV (17 kDa polypeptide, PetD), cytochrome f and the Rieske protein, while the 4 small subunits are PetG, PetL, PetM and PetN. The complex functions as a dimer. [2Fe-2S] cluster serves as cofactor.

The protein localises to the cellular thylakoid membrane. The catalysed reaction is 2 oxidized [plastocyanin] + a plastoquinol + 2 H(+)(in) = 2 reduced [plastocyanin] + a plastoquinone + 4 H(+)(out). Component of the cytochrome b6-f complex, which mediates electron transfer between photosystem II (PSII) and photosystem I (PSI), cyclic electron flow around PSI, and state transitions. This chain is Cytochrome b6-f complex iron-sulfur subunit, found in Prochlorococcus marinus (strain MIT 9211).